We begin with the raw amino-acid sequence, 120 residues long: Cu-Zn superoxide dismutase-like protein OPG175 (120 aa).

An intrachain disulfide couples C52 to C102.

This sequence belongs to the Cu-Zn superoxide dismutase family.

The protein resides in the virion. The protein localises to the host cytoplasm. Functionally, superoxide dismutase-like protein with no enzymatic activity. This Vaccinia virus (strain Tashkent) (VACV) protein is Cu-Zn superoxide dismutase-like protein OPG175 (OPG175).